A 230-amino-acid polypeptide reads, in one-letter code: Probable nicotinate-nucleotide adenylyltransferase (230 aa).

Belongs to the NadD family.

The enzyme catalyses nicotinate beta-D-ribonucleotide + ATP + H(+) = deamido-NAD(+) + diphosphate. It functions in the pathway cofactor biosynthesis; NAD(+) biosynthesis; deamido-NAD(+) from nicotinate D-ribonucleotide: step 1/1. Functionally, catalyzes the reversible adenylation of nicotinate mononucleotide (NaMN) to nicotinic acid adenine dinucleotide (NaAD). This chain is Probable nicotinate-nucleotide adenylyltransferase, found in Pseudomonas putida (strain ATCC 47054 / DSM 6125 / CFBP 8728 / NCIMB 11950 / KT2440).